The sequence spans 526 residues: Peptide chain release factor 3 (526 aa).

The 269-residue stretch at 9-277 folds into the tr-type G domain; it reads DKRRTFAIIS…GIVEWAPVPQ (269 aa). GTP-binding positions include 18-25, 86-90, and 140-143; these read SHPDAGKT, DTPGH, and NKLD.

Belongs to the TRAFAC class translation factor GTPase superfamily. Classic translation factor GTPase family. PrfC subfamily.

It is found in the cytoplasm. Functionally, increases the formation of ribosomal termination complexes and stimulates activities of RF-1 and RF-2. It binds guanine nucleotides and has strong preference for UGA stop codons. It may interact directly with the ribosome. The stimulation of RF-1 and RF-2 is significantly reduced by GTP and GDP, but not by GMP. This chain is Peptide chain release factor 3, found in Shewanella pealeana (strain ATCC 700345 / ANG-SQ1).